Here is a 457-residue protein sequence, read N- to C-terminus: Probable ECA polymerase (457 aa).

A run of 11 helical transmembrane segments spans residues 3-23 (LLQF…ILTL), 41-61 (MLFL…VFGF), 65-85 (VVPA…YAIY), 118-138 (IMAL…GFLL), 154-174 (GVAL…VYFL), 181-201 (WLLF…IVGG), 206-226 (IIIA…ITLW), 227-247 (MLAL…LKRY), 340-360 (LVVM…GLII), 377-397 (YKAA…IVLA), and 408-428 (VVFF…LYWL).

This sequence belongs to the WzyE family. Probably part of a complex composed of WzxE, WzyE and WzzE.

The protein localises to the cell inner membrane. It functions in the pathway bacterial outer membrane biogenesis; enterobacterial common antigen biosynthesis. Probably involved in the polymerization of enterobacterial common antigen (ECA) trisaccharide repeat units. In Erwinia tasmaniensis (strain DSM 17950 / CFBP 7177 / CIP 109463 / NCPPB 4357 / Et1/99), this protein is Probable ECA polymerase.